The sequence spans 977 residues: MTIKRNGYNEYISMSSNSSPLLLYDIISLTNGSNDNEIIINFRSHVLNSNIIELLSGAAPHYFDVRNILVRNMESQKIGASFTINSITFVSEYMQYFVLNGNENLPNVYIDERGVVAYRKVWRRFTLGSPMFVFDYDGKLVKFTIAVERAKEGITVSSILHTRVRILDANSEDDIAFISEAIVTMMIYYKNSELEISQYYAENLYDELPRVRVLRDSKRIRNKTARRIRTTSINDIRTVIPVNNYARQCNRLPMLVDSIDDVPTELRGNTIKFPLHGEGGIDKPKYVYCRYSDAPYPGMMVNNLAGASKKFPYLPCCYKTSQEVKDVNLAYSRDVMPEVSSVAPNRVQIYFNTQRLLPCNSFGRSPMCIEKFITGINYFDDRLHDDDDNDSVSEYYPTISKVTDDVNASTYYCIRGGVQKGPNSIIEAVLRSLQYLDGRDPRTLSITDSILNSERLKLRDCINVSAQELYDIPFDKRLDILSSTQTYLDGFRFVKALQYQYDVNIYIYSRNCGPVTRFIYNHNEISLKFEDNDNINKQQQQQRERNDDDDDDDDSTLVLPYHNKSSAYIDTKIHRKSIVIYIHHGTEATTNATGYPHVEYIMFRKHKKVVEKLWDVYKAMLPVNITNVYGLSYYEADNDDINETISKRVAENCRKKLYVSTGKLLKLVGENNDGDDDDSFIPKLQVLDRLGKCVQLDEYRISSLSDFIEPLPLPIVNENMFYNNPSCLTQCYGFDAAFKVDRLSRLLLYITLYEMTLTGSITSVYFTINRQRFSELICDSGCVGKLLNNGCVTLQKYTHHLVSRTTTTTTTISPSISQEDHENNIDDSNITYILVDSSDTAKRLKYNATLLIKRMTAKEIDNLKLSTHVLPLLRYERDFALSNTSHDNMVVVTSMDKFTTKSFDHRYIYKIPSTIIPNIGESLVLITNESKEQTELVTVTSIENFTRIHDHYENSDAIQFKCVVNVWSGASTWKKSV.

The tract at residues 531–556 is disordered; the sequence is DNDNINKQQQQQRERNDDDDDDDDST.

It belongs to the ascovirus HvAV ORF146 family.

Its subcellular location is the virion. The sequence is that of Structural protein ORF43 from Noctuidae (owlet moths).